The following is a 486-amino-acid chain: High-affinity iron permease fer2 (486 aa).

2 helical membrane-spanning segments follow: residues 76–96 (IVLLGALTGLLIAFAIGAAFL) and 113–133 (LWEGIFNLVAVLLITPMSLAI). N174 carries an N-linked (GlcNAc...) asparagine glycan. The tract at residues 175–209 (HSDDSASASSSSARQAAEEEAGTKTTRTEKLNPLE) is disordered. Residues 179–189 (SASASSSSARQ) show a composition bias toward low complexity. 3 helical membrane passes run 252 to 272 (ALFTIPLITTLREGLEGVVFI), 283 to 303 (SIPLPAIVGLAVGLGIGFLIF), and 308 to 328 (LVSVRIFLVFSTCFLLLIASG). N393 carries an N-linked (GlcNAc...) asparagine glycan. Residues 400-420 (SVFMYIGYWFAVAGYLWYQIW) traverse the membrane as a helical segment. Residue N438 is glycosylated (N-linked (GlcNAc...) asparagine). Positions 441 to 486 (IQARQRKQEKAHQRQLREADQEEHGHSSNSDKQQHPSEAGPSTLSH) are disordered. Residues 446 to 466 (RKQEKAHQRQLREADQEEHGH) are compositionally biased toward basic and acidic residues.

It belongs to the oxidase-dependent Fe transporter (OFeT) (TC 9.A.10.1) family.

The protein resides in the cell membrane. In terms of biological role, permease for high affinity iron uptake. This is High-affinity iron permease fer2 from Mycosarcoma maydis (Corn smut fungus).